Reading from the N-terminus, the 452-residue chain is Septin-10 (452 aa).

One can recognise a Septin-type G domain in the interval 36 to 302 (QGFCFNILCV…ELYRRCKLQE (267 aa)). A G1 motif region spans residues 46–53 (GETGIGKS). GTP is bound by residues 46-53 (GETGIGKS), Gly-101, 182-190 (KADTISKSE), Gly-236, and Arg-251. The tract at residues 98–101 (NTVG) is G3 motif. Positions 181–184 (AKAD) are G4 motif. Ser-414 is subject to Phosphoserine.

This sequence belongs to the TRAFAC class TrmE-Era-EngA-EngB-Septin-like GTPase superfamily. Septin GTPase family. In terms of assembly, septins polymerize into heterooligomeric protein complexes that form filaments, and can associate with cellular membranes, actin filaments and microtubules. GTPase activity is required for filament formation. Interacts with ADGB. Proteolytically cleaved in vitro in a calmodulin-dependent manner.

It localises to the cytoplasm. The protein localises to the cytoskeleton. It is found in the cell projection. Its subcellular location is the cilium. The protein resides in the flagellum. Its function is as follows. Filament-forming cytoskeletal GTPase. May play a role in cytokinesis (Potential). The protein is Septin-10 of Mus musculus (Mouse).